Reading from the N-terminus, the 382-residue chain is Mannitol-1-phosphate 5-dehydrogenase (382 aa).

3–14 contributes to the NAD(+) binding site; the sequence is ALHFGAGNIGRG.

Belongs to the mannitol dehydrogenase family.

The catalysed reaction is D-mannitol 1-phosphate + NAD(+) = beta-D-fructose 6-phosphate + NADH + H(+). The polypeptide is Mannitol-1-phosphate 5-dehydrogenase (Mannheimia succiniciproducens (strain KCTC 0769BP / MBEL55E)).